Consider the following 410-residue polypeptide: NADH-quinone oxidoreductase subunit D (410 aa).

This sequence belongs to the complex I 49 kDa subunit family. NDH-1 is composed of 14 different subunits. Subunits NuoB, C, D, E, F, and G constitute the peripheral sector of the complex.

The protein localises to the cell inner membrane. It catalyses the reaction a quinone + NADH + 5 H(+)(in) = a quinol + NAD(+) + 4 H(+)(out). In terms of biological role, NDH-1 shuttles electrons from NADH, via FMN and iron-sulfur (Fe-S) centers, to quinones in the respiratory chain. The immediate electron acceptor for the enzyme in this species is believed to be ubiquinone. Couples the redox reaction to proton translocation (for every two electrons transferred, four hydrogen ions are translocated across the cytoplasmic membrane), and thus conserves the redox energy in a proton gradient. The protein is NADH-quinone oxidoreductase subunit D of Nitratiruptor sp. (strain SB155-2).